A 1455-amino-acid polypeptide reads, in one-letter code: DNA-directed RNA polymerase subunit beta (1455 aa).

It belongs to the RNA polymerase beta chain family. The RNAP catalytic core consists of 2 alpha, 1 beta, 1 beta' and 1 omega subunit. When a sigma factor is associated with the core the holoenzyme is formed, which can initiate transcription.

The enzyme catalyses RNA(n) + a ribonucleoside 5'-triphosphate = RNA(n+1) + diphosphate. Its function is as follows. DNA-dependent RNA polymerase catalyzes the transcription of DNA into RNA using the four ribonucleoside triphosphates as substrates. This Rhizorhabdus wittichii (strain DSM 6014 / CCUG 31198 / JCM 15750 / NBRC 105917 / EY 4224 / RW1) (Sphingomonas wittichii) protein is DNA-directed RNA polymerase subunit beta.